Consider the following 163-residue polypeptide: Inorganic pyrophosphatase (163 aa).

Residues K21, R35, and Y47 each contribute to the substrate site. Mg(2+)-binding residues include D57, D62, and D94. Residue Y131 coordinates substrate.

It belongs to the PPase family. In terms of assembly, homohexamer. It depends on Mg(2+) as a cofactor.

Its subcellular location is the cytoplasm. The catalysed reaction is diphosphate + H2O = 2 phosphate + H(+). Catalyzes the hydrolysis of inorganic pyrophosphate (PPi) forming two phosphate ions. The polypeptide is Inorganic pyrophosphatase (Halalkalibacterium halodurans (strain ATCC BAA-125 / DSM 18197 / FERM 7344 / JCM 9153 / C-125) (Bacillus halodurans)).